Consider the following 1305-residue polypeptide: Nonribosomal peptide synthetase hkm11 (1305 aa).

The interval 278–672 is adenylation; it reads TYGELDRWAK…GEIEHHLRPK (395 aa). The 77-residue stretch at 788-864 folds into the Carrier domain; the sequence is APTTEQEALL…SLASRMRQYN (77 aa). Ser-825 is modified (O-(pantetheine 4'-phosphoryl)serine). The tract at residues 926–1166 is condensation; sequence KGQLDRHQLQ…LCLNITAVRV (241 aa).

The protein belongs to the NRP synthetase family.

The catalysed reaction is hancockiamide D + (E)-cinnamate + ATP = hancockiamide A + AMP + diphosphate. It catalyses the reaction hancockiamide H + (E)-cinnamate + ATP = hancockiamide G + AMP + diphosphate. It functions in the pathway secondary metabolite biosynthesis. Nonribosomal peptide synthetase; part of the gene cluster that mediates the biosynthesis of hancockiamides, an unusual new family of N-cinnamoylated piperazines. The NRPS hkm10 and the NmrA-like reductase hkm9 are proposed to convert two molecules of L-Phe to the intermediary piperazine called xenocockiamide A. Xenocockiamide A is then converted to hancockiamide D via a series of hydroxylations and O-methylations. The tyrosinase hkm6 may catalyze an aromatic hydroxylation, then the 2-oxoglutarate-dependent Fe(II) dioxygenase hkm4 and the FAD-dependent phenol hydroxylase hkm7 may catalyze consecutive hydroxylations to install 2 more hydroxy groups, and the methyltransferase hkm8 probably catalyzes two methylations using 2 molecules of S-adenosyl-L-methionine (SAM). The NRPS hkm11 activates and transfers trans-cinnamate supplied by the PAL hkm12 to hancockiamide D and produces hancockiamide A. NRPS Hkm11 has the flexibility to tolerate the bulky hancockiamide G as a substrate and the absence of the acetyl-transferase hkm3 opens up the opportunity for hkm11 to introduce a second N-cinnamoyl moiety. The cytochrome P450 monooxygenase hkm5 catalyzes the methylenedioxy bridge formation, converting hancockiamide A into hancockiamide G. Hkm5 can also convert hancockiamide B into hancockiamide C, and hancockiamide D into hancockiamide H. The N-acetyltransferase hkm3 finally transfers an acetyl group to 1-N of piperazine, converting hancockiamide A into hancockiamide B and hancockiamide G into hancockiamide C. In Aspergillus hancockii, this protein is Nonribosomal peptide synthetase hkm11.